A 152-amino-acid chain; its full sequence is Globin CTT-E/E' (152 aa).

The signal sequence occupies residues 1–15 (MKFIILALCVAAASA). One can recognise a Globin domain in the interval 16–152 (LSGDQIGLVQ…AFFGAVFAKM (137 aa)). 2 residues coordinate heme b: His-73 and His-102.

Belongs to the globin family.

The protein is Globin CTT-E/E' (CTT-E) of Chironomus thummi thummi (Midge).